A 391-amino-acid polypeptide reads, in one-letter code: Lysophosphatidylinositol acyltransferase 10 (391 aa).

A run of 5 helical transmembrane segments spans residues 10 to 30, 52 to 72, 97 to 119, 323 to 343, and 347 to 367; these read LLGW…NYII, AISY…GVRI, WMYM…KISL, LTSL…IFFV, and QLGF…YGGI.

It belongs to the 1-acyl-sn-glycerol-3-phosphate acyltransferase family. As to expression, expressed in seam cells, vulval epithelial cells and the major epithelial syncytium hyp7, and in several head neurons including AIY interneurons.

It localises to the endoplasmic reticulum membrane. It catalyses the reaction a 2-acyl-sn-glycero-3-phospho-D-myo-inositol + an acyl-CoA = a 1,2-diacyl-sn-glycero-3-phospho-(1D-myo-inositol) + CoA. It carries out the reaction a 2-acyl-sn-glycero-3-phospho-D-myo-inositol + octadecanoyl-CoA = 1-octadecanoyl-2-acyl-sn-glycero-3-phospho-1D-myo-inositol + CoA. It participates in phospholipid metabolism; phosphatidylinositol metabolism. In terms of biological role, acyltransferase required for the fatty acid remodeling of phosphatidylinositol (1,2-diacyl-sn-glycero-3-phosphoinositol or PI). Mediates the conversion of lysophosphatidylinositol (2-acylglycerophosphatidylinositol or LPI) into PI (LPIAT activity). Has preference for saturated and mono-unsaturated fatty acids as acyl donors and sn-2-acyl lysoPI (2-acyl-sn-glycero-3-phospho-D-myo-inositol) as acyl acceptor. Contributes to the asymmetric cell division of epithelial cells. Asymmetric cell division is the fundamental mechanism by which multicellular organisms generate cell diversity. This Caenorhabditis elegans protein is Lysophosphatidylinositol acyltransferase 10.